The following is a 404-amino-acid chain: Cysteine desulfurase IscS (404 aa).

Pyridoxal 5'-phosphate is bound by residues 75 to 76 (AT), Asn155, Gln183, and 203 to 205 (SAH). An N6-(pyridoxal phosphate)lysine modification is found at Lys206. Thr243 serves as a coordination point for pyridoxal 5'-phosphate. Cys328 acts as the Cysteine persulfide intermediate in catalysis. Cys328 contributes to the [2Fe-2S] cluster binding site.

It belongs to the class-V pyridoxal-phosphate-dependent aminotransferase family. NifS/IscS subfamily. As to quaternary structure, homodimer. Forms a heterotetramer with IscU, interacts with other sulfur acceptors. It depends on pyridoxal 5'-phosphate as a cofactor.

It localises to the cytoplasm. It catalyses the reaction (sulfur carrier)-H + L-cysteine = (sulfur carrier)-SH + L-alanine. It functions in the pathway cofactor biosynthesis; iron-sulfur cluster biosynthesis. In terms of biological role, master enzyme that delivers sulfur to a number of partners involved in Fe-S cluster assembly, tRNA modification or cofactor biosynthesis. Catalyzes the removal of elemental sulfur atoms from cysteine to produce alanine. Functions as a sulfur delivery protein for Fe-S cluster synthesis onto IscU, an Fe-S scaffold assembly protein, as well as other S acceptor proteins. This Pseudomonas fluorescens (strain Pf0-1) protein is Cysteine desulfurase IscS.